A 425-amino-acid polypeptide reads, in one-letter code: MTSASFAFSPRVLDPLDPQVRPDPQGRFGPFGGRFVPETLMSALTELEEAFEHHWRDPDFRAEFHNLLRDFVGRPSPLYFAQRLTEYYGGPQIYLKREDLNHTGAHKINNALGQVLLAVRMGKRRIIAETGAGQHGVATATVCARFGLECVIYMGALDMERQAPNVQRMRLLGAEVRGVESGTRTLKDALSEAIRDWVTNVETTHYVIGTVAGPHPYPKLVRAFHDVIGQETRQQCQEKWGGLPDVLLACVGGGSNALGLFNEFVRDPQVRLIGIEAAGEGLHTPRHAATLNRGRIGVLHGAMSYLLQDEEGQVQEAHSISAGLDYPGVGPEHSYLKEIGRAEYYAVTDDEAVEALLLLSRLEGIIPALETAHALAYLKTLAPQQGLRPANAIGPQQRVVVNCSGRGDKDLNTVFKYLQQRGRSF.

K107 is modified (N6-(pyridoxal phosphate)lysine).

It belongs to the TrpB family. In terms of assembly, tetramer of two alpha and two beta chains. Pyridoxal 5'-phosphate is required as a cofactor.

It catalyses the reaction (1S,2R)-1-C-(indol-3-yl)glycerol 3-phosphate + L-serine = D-glyceraldehyde 3-phosphate + L-tryptophan + H2O. It participates in amino-acid biosynthesis; L-tryptophan biosynthesis; L-tryptophan from chorismate: step 5/5. Its function is as follows. The beta subunit is responsible for the synthesis of L-tryptophan from indole and L-serine. This is Tryptophan synthase beta chain from Synechococcus sp. (strain JA-2-3B'a(2-13)) (Cyanobacteria bacterium Yellowstone B-Prime).